The sequence spans 498 residues: Polyamine aminopropyltransferase (498 aa).

A run of 6 helical transmembrane segments spans residues 7-27 (ISVL…GTIA), 35-55 (VTQF…GSWL), 67-87 (FLEI…ILYL), 97-117 (IPLF…IPVL), 134-154 (VLSL…IFFA), and 163-183 (GFIF…VLPL). The spermidine synthase stretch occupies residues 196–446 (VVVLTLLILG…AGQRPIQFKK (251 aa)). The PABS domain occupies 200–439 (TLLILGFSYS…GEWGFVLAGQ (240 aa)). An S-methyl-5'-thioadenosine-binding site is contributed by glutamine 234. Histidine 264 and aspartate 288 together coordinate spermidine. S-methyl-5'-thioadenosine is bound by residues aspartate 308 and 342–343 (DA). Aspartate 360 serves as the catalytic Proton acceptor.

This sequence belongs to the spermidine/spermine synthase family. As to quaternary structure, homodimer or homotetramer.

Its subcellular location is the cell membrane. The catalysed reaction is S-adenosyl 3-(methylsulfanyl)propylamine + putrescine = S-methyl-5'-thioadenosine + spermidine + H(+). Its pathway is amine and polyamine biosynthesis; spermidine biosynthesis; spermidine from putrescine: step 1/1. Catalyzes the irreversible transfer of a propylamine group from the amino donor S-adenosylmethioninamine (decarboxy-AdoMet) to putrescine (1,4-diaminobutane) to yield spermidine. The protein is Polyamine aminopropyltransferase of Leptospira interrogans serogroup Icterohaemorrhagiae serovar copenhageni (strain Fiocruz L1-130).